A 146-amino-acid polypeptide reads, in one-letter code: Putative nickel-responsive regulator 1 (146 aa).

Residues H81, H92, Y94, and C100 each coordinate Ni(2+).

It belongs to the transcriptional regulatory CopG/NikR family. The cofactor is Ni(2+).

Its function is as follows. Transcriptional regulator. This Methanosarcina mazei (strain ATCC BAA-159 / DSM 3647 / Goe1 / Go1 / JCM 11833 / OCM 88) (Methanosarcina frisia) protein is Putative nickel-responsive regulator 1.